Consider the following 94-residue polypeptide: ESAT-6-like protein EsxL (94 aa).

This sequence belongs to the WXG100 family. ESAT-6 subfamily. In terms of assembly, strongly interacts with EsxK to form a heterodimeric complex under reducing conditions.

It localises to the secreted. The chain is ESAT-6-like protein EsxL from Mycobacterium bovis (strain ATCC BAA-935 / AF2122/97).